Consider the following 594-residue polypeptide: Elongation factor 4 (594 aa).

The region spanning Lys-2 to Glu-184 is the tr-type G domain. Residues Asp-14 to Thr-19 and Asn-131 to Asp-134 contribute to the GTP site.

Belongs to the TRAFAC class translation factor GTPase superfamily. Classic translation factor GTPase family. LepA subfamily.

It localises to the cell inner membrane. It carries out the reaction GTP + H2O = GDP + phosphate + H(+). Required for accurate and efficient protein synthesis under certain stress conditions. May act as a fidelity factor of the translation reaction, by catalyzing a one-codon backward translocation of tRNAs on improperly translocated ribosomes. Back-translocation proceeds from a post-translocation (POST) complex to a pre-translocation (PRE) complex, thus giving elongation factor G a second chance to translocate the tRNAs correctly. Binds to ribosomes in a GTP-dependent manner. This is Elongation factor 4 from Francisella tularensis subsp. tularensis (strain FSC 198).